A 608-amino-acid polypeptide reads, in one-letter code: UvrABC system protein C (608 aa).

The 79-residue stretch at Asn16 to Ile94 folds into the GIY-YIG domain. Residues Asn204–Val239 enclose the UVR domain.

The protein belongs to the UvrC family. As to quaternary structure, interacts with UvrB in an incision complex.

It is found in the cytoplasm. Its function is as follows. The UvrABC repair system catalyzes the recognition and processing of DNA lesions. UvrC both incises the 5' and 3' sides of the lesion. The N-terminal half is responsible for the 3' incision and the C-terminal half is responsible for the 5' incision. The protein is UvrABC system protein C of Pseudomonas paraeruginosa (strain DSM 24068 / PA7) (Pseudomonas aeruginosa (strain PA7)).